We begin with the raw amino-acid sequence, 332 residues long: Biotin synthase (332 aa).

A Radical SAM core domain is found at 53–282 (HFGKKVKLNM…TKEIRISGGR (230 aa)). [4Fe-4S] cluster is bound by residues Cys-71, Cys-75, and Cys-78. The [2Fe-2S] cluster site is built by Cys-115, Cys-147, Cys-207, and Arg-277.

It belongs to the radical SAM superfamily. Biotin synthase family. In terms of assembly, homodimer. [4Fe-4S] cluster serves as cofactor. [2Fe-2S] cluster is required as a cofactor.

The enzyme catalyses (4R,5S)-dethiobiotin + (sulfur carrier)-SH + 2 reduced [2Fe-2S]-[ferredoxin] + 2 S-adenosyl-L-methionine = (sulfur carrier)-H + biotin + 2 5'-deoxyadenosine + 2 L-methionine + 2 oxidized [2Fe-2S]-[ferredoxin]. The protein operates within cofactor biosynthesis; biotin biosynthesis; biotin from 7,8-diaminononanoate: step 2/2. Catalyzes the conversion of dethiobiotin (DTB) to biotin by the insertion of a sulfur atom into dethiobiotin via a radical-based mechanism. This is Biotin synthase from Bacillus cereus (strain G9842).